Here is a 475-residue protein sequence, read N- to C-terminus: MELRRKLCIVVAVFVIVIEFASANFVFKAQHKFAGKKKNLEHFKSHDTRRHSRMLASIDLPLGGDSRVDSVGLYFTKIKLGSPPKEYHVQVDTGSDILWINCKPCPKCPTKTNLNFRLSLFDMNASSTSKKVGCDDDFCSFISQSDSCQPALGCSYHIVYADESTSDGKFIRDMLTLEQVTGDLKTGPLGQEVVFGCGSDQSGQLGNGDSAVDGVMGFGQSNTSVLSQLAATGDAKRVFSHCLDNVKGGGIFAVGVVDSPKVKTTPMVPNQMHYNVMLMGMDVDGTSLDLPRSIVRNGGTIVDSGTTLAYFPKVLYDSLIETILARQPVKLHIVEETFQCFSFSTNVDEAFPPVSFEFEDSVKLTVYPHDYLFTLEEELYCFGWQAGGLTTDERSEVILLGDLVLSNKLVVYDLDNEVIGWADHNCSSSIKIKDGSGGVYSVGADNLSSAPRLLMITKLLTILSPLIVMAFTSLA.

The first 23 residues, 1–23 (MELRRKLCIVVAVFVIVIEFASA), serve as a signal peptide directing secretion. Positions 74-422 (YFTKIKLGSP…DLDNEVIGWA (349 aa)) constitute a Peptidase A1 domain. Asp-92 is an active-site residue. Asn-124 and Asn-222 each carry an N-linked (GlcNAc...) asparagine glycan. Asp-303 is an active-site residue. Asn-425 and Asn-446 each carry an N-linked (GlcNAc...) asparagine glycan. Ser-449 carries GPI-anchor amidated serine lipidation. The propeptide at 450–475 (APRLLMITKLLTILSPLIVMAFTSLA) is removed in mature form.

The protein belongs to the peptidase A1 family. As to expression, highly expressed in pollen and pollen tubes. Mostly expressed in inflorescence, flowers and siliques, and barely in leaves and seedlings.

It localises to the cell membrane. The protein resides in the cytoplasm. The protein localises to the cytosol. Displays aspartic proteolytic activity. Together with A36, contributes to pollen and ovule development, including the apical cell wall constitution of the growing pollen tubes. This Arabidopsis thaliana (Mouse-ear cress) protein is Aspartic proteinase 39.